The sequence spans 292 residues: ATP synthase gamma chain (292 aa).

This sequence belongs to the ATPase gamma chain family. F-type ATPases have 2 components, CF(1) - the catalytic core - and CF(0) - the membrane proton channel. CF(1) has five subunits: alpha(3), beta(3), gamma(1), delta(1), epsilon(1). CF(0) has three main subunits: a, b and c.

It is found in the cell membrane. Functionally, produces ATP from ADP in the presence of a proton gradient across the membrane. The gamma chain is believed to be important in regulating ATPase activity and the flow of protons through the CF(0) complex. The protein is ATP synthase gamma chain of Streptococcus pneumoniae (strain JJA).